Reading from the N-terminus, the 228-residue chain is Prolactin-2A1 (228 aa).

The N-terminal stretch at 1–29 (MQLSITHPCCWTLRLLLVSNLLLWENVAL) is a signal peptide. Disulfide bonds link Cys87–Cys203 and Cys220–Cys228.

Belongs to the somatotropin/prolactin family. In terms of tissue distribution, expressed specifically in the placenta. Highly expressed in invasive trophoblast cells lining the central placental vessel.

It is found in the secreted. In Rattus norvegicus (Rat), this protein is Prolactin-2A1 (Prl2a1).